We begin with the raw amino-acid sequence, 126 residues long: Defensin-like protein 183 (126 aa).

The N-terminal stretch at 1–26 (MEKALSLVVFIIFSIMLASVENKVNA) is a signal peptide. Intrachain disulfides connect Cys-29–Cys-68, Cys-36–Cys-55, Cys-39–Cys-62, Cys-43–Cys-64, Cys-80–Cys-126, Cys-91–Cys-111, Cys-96–Cys-120, and Cys-100–Cys-122.

It belongs to the DEFL family.

It is found in the secreted. This is Defensin-like protein 183 (LCR19) from Arabidopsis thaliana (Mouse-ear cress).